The sequence spans 335 residues: N-acetylmuramoyl-L-alanine amidase sle1 (335 aa).

Residues 1-25 form the signal peptide; that stretch reads MQKKVIAAIIGTSAISAVAATQANA. The LysM 1 domain occupies 27-70; that stretch reads TTHTVKPGESVWAISNKYGISIAKLKSLNNLTSNLIFPNQVLKV. The segment covering 71–86 has biased composition (low complexity); that stretch reads SGSSNSTSNSSRPSTN. Residues 71–90 form a disordered region; the sequence is SGSSNSTSNSSRPSTNSGGG. 2 LysM domains span residues 91-134 and 158-201; these read SYYT…KLKV. The region spanning 211-335 is the Peptidase C51 domain; the sequence is ASATTTNRGY…YQVNNYRYIH (125 aa).

The protein localises to the secreted. Its subcellular location is the cell surface. It carries out the reaction Hydrolyzes the link between N-acetylmuramoyl residues and L-amino acid residues in certain cell-wall glycopeptides.. Peptidoglycan hydrolase involved in the splitting of the septum during cell division. This is N-acetylmuramoyl-L-alanine amidase sle1 (sle1) from Staphylococcus aureus (strain bovine RF122 / ET3-1).